The primary structure comprises 553 residues: Adenine deaminase 1 (553 aa).

It belongs to the metallo-dependent hydrolases superfamily. Adenine deaminase family. The cofactor is Mn(2+).

The catalysed reaction is adenine + H2O + H(+) = hypoxanthine + NH4(+). The chain is Adenine deaminase 1 from Oenococcus oeni (strain ATCC BAA-331 / PSU-1).